We begin with the raw amino-acid sequence, 160 residues long: Eosinophil cationic protein (160 aa).

A signal peptide spans 1–27 (MVPKLFTPQICLLLLLGLMGVEGSLHA). Positions 28-72 (RPPQFTKAQWFAIQHINVNPPRCTIAMRVINNYQRRCKNQNTFLR) are required for nearly all of the bactericidal activities; partially involved in LPS-binding. His42 serves as the catalytic Proton acceptor. 4 cysteine pairs are disulfide-bonded: Cys50–Cys110, Cys64–Cys123, Cys82–Cys138, and Cys89–Cys98. Tyr60 is modified (3'-nitrotyrosine). 65 to 69 (KNQNT) provides a ligand contact to substrate. 3 N-linked (GlcNAc...) asparagine glycosylation sites follow: Asn84, Asn92, and Asn119. His155 (proton donor) is an active-site residue.

This sequence belongs to the pancreatic ribonuclease family. Interacts with bacterial lipopolysaccharide (LPS) and lipoteichoic acid (LTA). In vitro interacts with phospholipid bilayers.

It is found in the secreted. Its function is as follows. Cytotoxin and helminthotoxin with low-efficiency ribonuclease activity. Possesses a wide variety of biological activities. Exhibits antibacterial activity. The polypeptide is Eosinophil cationic protein (RNASE3) (Macaca nemestrina (Pig-tailed macaque)).